The primary structure comprises 402 residues: Multidrug resistance protein MdtH (402 aa).

Residues 1 to 12 (MSRVSQARNLGK) are Cytoplasmic-facing. A helical transmembrane segment spans residues 13-33 (YFLLIDNMLVVLGFFVVFPLI). The Periplasmic segment spans residues 34–98 (SIRFVDQMGW…GFATMGIAHE (65 aa)). The helical transmembrane segment at 99-116 (PWLLWFSCFLSGLGGTLF) threads the bilayer. Residues 117–138 (DPPRSALVVKLIRPEQRDRFFS) are Cytoplasmic-facing. Residues 139–159 (LLMMQDSAGAVIGALLGSWLL) traverse the membrane as a helical segment. The Periplasmic portion of the chain corresponds to 160-164 (QYDFR). The chain crosses the membrane as a helical span at residues 165 to 185 (LVCATGAILFILCALFNAWLL). At 186-213 (PAWKLSTVRTPVREGMRRVMSDKRFVTY) the chain is on the cytoplasmic side. The helical transmembrane segment at 214-234 (VLTLAGYYMLAVQVMLMLPIM) threads the bilayer. The Periplasmic portion of the chain corresponds to 235–243 (VNDIAGSPA). The chain crosses the membrane as a helical span at residues 244–264 (AVKWMYAIEACLSLTLLYPIA). At 265–276 (RWSEKRFRLEHR) the chain is on the cytoplasmic side. The chain crosses the membrane as a helical span at residues 277–297 (LMAGLLVMSLSMLPIGMVGNL). The Periplasmic segment spans residues 298-299 (QQ). A helical transmembrane segment spans residues 300–320 (LFTLICAFYIGSVIAEPARET). At 321-339 (LSASLADARARGSYMGFSR) the chain is on the cytoplasmic side. Residues 340–360 (LGLAIGGAIGYIGGGWLFDMG) form a helical membrane-spanning segment. Over 361–367 (KALAQPE) the chain is Periplasmic. Residues 368–388 (LPWMMLGIIGFITFLALGWQF) form a helical membrane-spanning segment. The Cytoplasmic segment spans residues 389 to 402 (SHKRTPRRMLEPGA).

This sequence belongs to the major facilitator superfamily. DHA1 family. MdtH (TC 2.A.1.2.21) subfamily.

The protein localises to the cell inner membrane. The chain is Multidrug resistance protein MdtH from Salmonella typhimurium (strain LT2 / SGSC1412 / ATCC 700720).